The chain runs to 44 residues: Thymosin beta-4, Y-chromosomal (44 aa).

The disordered stretch occupies residues 1–44 (MSDKPGMAEIEKFDKSKLKKTETQEKNPLSSKETIEQERQAGES). Basic and acidic residues-rich tracts occupy residues 9–25 (EIEK…ETQE) and 33–44 (ETIEQERQAGES).

The protein belongs to the thymosin beta family. As to expression, ubiquitous.

The protein localises to the cytoplasm. The protein resides in the cytoskeleton. Plays an important role in the organization of the cytoskeleton. Binds to and sequesters actin monomers (G actin) and therefore inhibits actin polymerization. The protein is Thymosin beta-4, Y-chromosomal (TMSB4Y) of Homo sapiens (Human).